The primary structure comprises 440 residues: UDP-glycosyltransferase 87A1 (440 aa).

Residues serine 263, 312–314 (CDQ), 329–337 (HCGYNSTLE), and 351–354 (FWDQ) each bind UDP-alpha-D-glucose.

This sequence belongs to the UDP-glycosyltransferase family.

The sequence is that of UDP-glycosyltransferase 87A1 (UGT87A1) from Arabidopsis thaliana (Mouse-ear cress).